Here is a 132-residue protein sequence, read N- to C-terminus: uncharacterized protein (132 aa).

The interval 1 to 34 (MTAGAGGSPPTRRCPATEDRAPATVATPSSADPT) is disordered.

It to M.tuberculosis Rv2656c.

This is an uncharacterized protein from Mycobacterium tuberculosis (strain CDC 1551 / Oshkosh).